The following is a 243-amino-acid chain: Putative outer membrane protein RP075 (243 aa).

The N-terminal stretch at 1-23 (MLRIVKKLWVILFISNISINSFA) is a signal peptide.

Belongs to the OmpW/AlkL family.

The protein localises to the cell outer membrane. The chain is Putative outer membrane protein RP075 from Rickettsia prowazekii (strain Madrid E).